A 992-amino-acid chain; its full sequence is UPF0182 protein MT3285 (992 aa).

7 helical membrane passes run 17 to 39, 59 to 81, 113 to 135, 169 to 191, 212 to 229, 255 to 277, and 284 to 306; these read RILI…LIDA, LATR…FGGL, LVGI…SYWA, LMLS…AHYI, LVSL…AYWL, VLPA…FSAI, and IPAI…WPLI. Positions 906 to 938 are disordered; the sequence is PTEAAVPPSPAANPPPPASGPQPPPVTAAPPVP. Residues 912–938 show a composition bias toward pro residues; the sequence is PPSPAANPPPPASGPQPPPVTAAPPVP.

This sequence belongs to the UPF0182 family.

The protein resides in the cell membrane. The chain is UPF0182 protein MT3285 from Mycobacterium tuberculosis (strain CDC 1551 / Oshkosh).